The chain runs to 767 residues: Photosystem I P700 chlorophyll a apoprotein A1 (767 aa).

A disordered region spans residues 1–22 (MTISPPESGEKNKKVLEDPVKA). Residues 8–22 (SGEKNKKVLEDPVKA) are compositionally biased toward basic and acidic residues. A run of 8 helical transmembrane segments spans residues 76–99 (IFSA…FHGA), 162–185 (LMAL…FHYH), 201–225 (LNHH…HIGA), 309–327 (VSHH…GHMY), 368–391 (RHAQ…HHMY), 407–433 (LGLF…IAMV), 455–477 (ALIS…LYIH), and 558–576 (LMIH…LILL). [4Fe-4S] cluster contacts are provided by Cys-600 and Cys-609. Transmembrane regions (helical) follow at residues 616 to 637 (HVFL…HFSW) and 681 to 703 (ISMY…MFLF). His-692 contacts divinylchlorophyll a'. Divinyl chlorophyll a contacts are provided by Met-700 and Tyr-708. Trp-709 serves as a coordination point for phylloquinone. The chain crosses the membrane as a helical span at residues 741-761 (AVGVTHFLVGGIATTWAFFHA).

Belongs to the PsaA/PsaB family. As to quaternary structure, the PsaA/B heterodimer binds the P700 divinyl chlorophyll special pair and subsequent electron acceptors. PSI consists of a core antenna complex that captures photons, and an electron transfer chain that converts photonic excitation into a charge separation. The cyanobacterial PSI reaction center is composed of one copy each of PsaA,B,C,D,E,F,I,J,K,L,M and X, and forms trimeric complexes. PSI electron transfer chain: 5 divinyl chlorophyll a, 1 divinyl chlorophyll a', 2 phylloquinones and 3 4Fe-4S clusters. PSI core antenna: 90 divinyl chlorophyll a, 22 carotenoids, 3 phospholipids and 1 galactolipid. P700 is a divinyl chlorophyll a/divinyl chlorophyll a' dimer, A0 is one or more divinyl chlorophyll a, A1 is one or both phylloquinones and FX is a shared 4Fe-4S iron-sulfur center. is required as a cofactor.

The protein localises to the cellular thylakoid membrane. The catalysed reaction is reduced [plastocyanin] + hnu + oxidized [2Fe-2S]-[ferredoxin] = oxidized [plastocyanin] + reduced [2Fe-2S]-[ferredoxin]. In terms of biological role, psaA and PsaB bind P700, the primary electron donor of photosystem I (PSI), as well as the electron acceptors A0, A1 and FX. PSI is a plastocyanin/cytochrome c6-ferredoxin oxidoreductase, converting photonic excitation into a charge separation, which transfers an electron from the donor P700 chlorophyll pair to the spectroscopically characterized acceptors A0, A1, FX, FA and FB in turn. Oxidized P700 is reduced on the lumenal side of the thylakoid membrane by plastocyanin or cytochrome c6. This Prochlorococcus marinus (strain MIT 9301) protein is Photosystem I P700 chlorophyll a apoprotein A1.